Reading from the N-terminus, the 260-residue chain is Small ribosomal subunit protein uS2 (260 aa).

The tract at residues 225–260 (KGQTQTEAAPNAQAAPEAAAPAEQPAEEAAAASSEG) is disordered. Over residues 231-260 (EAAPNAQAAPEAAAPAEQPAEEAAAASSEG) the composition is skewed to low complexity.

This sequence belongs to the universal ribosomal protein uS2 family.

In Rhodopirellula baltica (strain DSM 10527 / NCIMB 13988 / SH1), this protein is Small ribosomal subunit protein uS2.